Consider the following 497-residue polypeptide: Protein DETOXIFICATION 25 (497 aa).

A run of 12 helical transmembrane segments spans residues 43–63, 70–90, 121–141, 157–177, 186–206, 216–236, 261–281, 291–311, 339–359, 381–401, 416–436, and 438–458; these read LPST…QAFI, GLAA…GIMA, IVDT…GPIL, IYPW…MQMY, IIGI…WWCV, ALLG…VYVF, LSIS…IIVL, IAIS…NICF, VVLV…LAFG, IVLS…GVAI, SYYA…NFGI, and GLWS…CYVI.

This sequence belongs to the multi antimicrobial extrusion (MATE) (TC 2.A.66.1) family.

The protein resides in the membrane. This chain is Protein DETOXIFICATION 25, found in Arabidopsis thaliana (Mouse-ear cress).